Reading from the N-terminus, the 70-residue chain is Large ribosomal subunit protein eL38 (70 aa).

This sequence belongs to the eukaryotic ribosomal protein eL38 family.

In Caenorhabditis elegans, this protein is Large ribosomal subunit protein eL38 (rpl-38).